The chain runs to 161 residues: Large ribosomal subunit protein uL15 (161 aa).

Residues 1–10 are compositionally biased toward basic and acidic residues; it reads MKLNELRDNP. Positions 1 to 42 are disordered; that stretch reads MKLNELRDNPGARPKSKRLGRGIGSGKGKTSGKGVKGQKARE. Positions 21 to 35 are enriched in gly residues; the sequence is RGIGSGKGKTSGKGV.

Belongs to the universal ribosomal protein uL15 family. In terms of assembly, part of the 50S ribosomal subunit.

Binds to the 23S rRNA. The polypeptide is Large ribosomal subunit protein uL15 (Acidiphilium cryptum (strain JF-5)).